Consider the following 294-residue polypeptide: Large ribosomal subunit protein uL2 (294 aa).

2 disordered regions span residues 1-37 (MGIR…RPEK) and 228-294 (GSVM…RAAQ). The span at 10–22 (TPSTRHMTVSNFE) shows a compositional bias: polar residues. The span at 23–37 (ELSRDENGKRPRPEK) shows a compositional bias: basic and acidic residues. Over residues 264–285 (KTRKRNKPSNKFIVRGRRRGGR) the composition is skewed to basic residues.

Belongs to the universal ribosomal protein uL2 family. Part of the 50S ribosomal subunit. Forms a bridge to the 30S subunit in the 70S ribosome.

Functionally, one of the primary rRNA binding proteins. Required for association of the 30S and 50S subunits to form the 70S ribosome, for tRNA binding and peptide bond formation. It has been suggested to have peptidyltransferase activity; this is somewhat controversial. Makes several contacts with the 16S rRNA in the 70S ribosome. The sequence is that of Large ribosomal subunit protein uL2 from Synechococcus sp. (strain JA-3-3Ab) (Cyanobacteria bacterium Yellowstone A-Prime).